The primary structure comprises 191 residues: Large ribosomal subunit protein eL15 (191 aa).

Belongs to the eukaryotic ribosomal protein eL15 family.

In Pyrobaculum aerophilum (strain ATCC 51768 / DSM 7523 / JCM 9630 / CIP 104966 / NBRC 100827 / IM2), this protein is Large ribosomal subunit protein eL15 (rpl15e).